The following is a 156-amino-acid chain: Small ribosomal subunit protein uS15 (156 aa).

The tract at residues 1 to 67 is disordered; it reads MARMHTRRRG…GVQGTPIPDV (67 aa). Basic and acidic residues predominate over residues 10–19; sequence GSSDSDKPAA. Residues 21–32 show a composition bias toward acidic residues; sequence EPPEWSDVDEDA.

This sequence belongs to the universal ribosomal protein uS15 family. In terms of assembly, part of the 30S ribosomal subunit.

This is Small ribosomal subunit protein uS15 from Haloarcula marismortui (strain ATCC 43049 / DSM 3752 / JCM 8966 / VKM B-1809) (Halobacterium marismortui).